Reading from the N-terminus, the 360-residue chain is Phospho-N-acetylmuramoyl-pentapeptide-transferase (360 aa).

10 consecutive transmembrane segments (helical) span residues 27–47, 71–91, 93–113, 128–148, 168–188, 199–219, 239–259, 262–282, 288–308, and 337–357; these read GAMI…INSL, TPTM…LLWA, LASV…AIGF, FSGK…AFVI, FVVN…VGAG, GLAI…AYLS, LAVV…FNAP, AIFM…TVAV, IVLA…IIQV, and QVVI…LSTL.

It belongs to the glycosyltransferase 4 family. MraY subfamily. Requires Mg(2+) as cofactor.

The protein resides in the cell inner membrane. It carries out the reaction UDP-N-acetyl-alpha-D-muramoyl-L-alanyl-gamma-D-glutamyl-meso-2,6-diaminopimeloyl-D-alanyl-D-alanine + di-trans,octa-cis-undecaprenyl phosphate = di-trans,octa-cis-undecaprenyl diphospho-N-acetyl-alpha-D-muramoyl-L-alanyl-D-glutamyl-meso-2,6-diaminopimeloyl-D-alanyl-D-alanine + UMP. Its pathway is cell wall biogenesis; peptidoglycan biosynthesis. Functionally, catalyzes the initial step of the lipid cycle reactions in the biosynthesis of the cell wall peptidoglycan: transfers peptidoglycan precursor phospho-MurNAc-pentapeptide from UDP-MurNAc-pentapeptide onto the lipid carrier undecaprenyl phosphate, yielding undecaprenyl-pyrophosphoryl-MurNAc-pentapeptide, known as lipid I. This chain is Phospho-N-acetylmuramoyl-pentapeptide-transferase, found in Brucella anthropi (strain ATCC 49188 / DSM 6882 / CCUG 24695 / JCM 21032 / LMG 3331 / NBRC 15819 / NCTC 12168 / Alc 37) (Ochrobactrum anthropi).